We begin with the raw amino-acid sequence, 354 residues long: Neuronal growth regulator 1 (354 aa).

Residues 1 to 37 (MDMMLLVQGACCSNQWLAAVLLSLCCLLPSCLPAGQS) form the signal peptide. 3 Ig-like C2-type domains span residues 38–134 (VDFP…VHLT), 139–221 (PKIY…KVVV), and 225–313 (PTIQ…LPLN). Cys60 and Cys118 are oxidised to a cystine. N-linked (GlcNAc...) asparagine glycosylation is found at Asn73 and Asn155. Cystine bridges form between Cys160–Cys203 and Cys245–Cys297. Tyr187 is subject to Phosphotyrosine. N-linked (GlcNAc...) asparagine glycosylation is found at Asn275, Asn286, Asn294, and Asn307. The GPI-anchor amidated glycine moiety is linked to residue Gly324. The propeptide at 325-354 (SADVLFSCWYLVLTLSSFTSIFYLKNAILQ) is removed in mature form.

It belongs to the immunoglobulin superfamily. IgLON family.

It is found in the cell membrane. Functionally, may be involved in cell-adhesion. May function as a trans-neural growth-promoting factor in regenerative axon sprouting in the mammalian brain. The polypeptide is Neuronal growth regulator 1 (NEGR1) (Pongo abelii (Sumatran orangutan)).